The primary structure comprises 298 residues: Aspartate carbamoyltransferase catalytic subunit (298 aa).

The carbamoyl phosphate site is built by Arg-50 and Thr-51. Lys-79 lines the L-aspartate pocket. Residues Arg-100, His-128, and Gln-131 each coordinate carbamoyl phosphate. Residues Arg-160 and Arg-221 each coordinate L-aspartate. Positions 260 and 261 each coordinate carbamoyl phosphate.

This sequence belongs to the aspartate/ornithine carbamoyltransferase superfamily. ATCase family. As to quaternary structure, heterooligomer of catalytic and regulatory chains.

The catalysed reaction is carbamoyl phosphate + L-aspartate = N-carbamoyl-L-aspartate + phosphate + H(+). It functions in the pathway pyrimidine metabolism; UMP biosynthesis via de novo pathway; (S)-dihydroorotate from bicarbonate: step 2/3. Catalyzes the condensation of carbamoyl phosphate and aspartate to form carbamoyl aspartate and inorganic phosphate, the committed step in the de novo pyrimidine nucleotide biosynthesis pathway. The polypeptide is Aspartate carbamoyltransferase catalytic subunit (Methanosphaerula palustris (strain ATCC BAA-1556 / DSM 19958 / E1-9c)).